The following is a 153-amino-acid chain: Coiled-coil-helix-coiled-coil-helix domain-containing protein 2 (153 aa).

2 disordered regions span residues 1-51 (MPRG…AAPR) and 78-106 (HAIT…QGAQ). Positions 14–51 (PPASRAPQMRAAPRRAPAAQPPAAAAPSAVGSPAAAPR) are enriched in low complexity. The CHCH domain maps to 113-153 (FGPCSLEIKQFLECAQNQSDVKLCEGFNEVLRQCRIANGLM). Short sequence motifs (cx9C motif) lie at residues 116–126 (CSLEIKQFLEC) and 136–146 (CEGFNEVLRQC). 2 disulfides stabilise this stretch: Cys116/Cys146 and Cys126/Cys136.

In terms of assembly, interacts with RBPJ.

It localises to the nucleus. The protein resides in the mitochondrion. The protein localises to the mitochondrion intermembrane space. In terms of biological role, transcription factor. Binds to the oxygen responsive element of COX4I2 and activates its transcription under hypoxia conditions (4% oxygen), as well as normoxia conditions (20% oxygen). This Mus musculus (Mouse) protein is Coiled-coil-helix-coiled-coil-helix domain-containing protein 2 (Chchd2).